A 374-amino-acid polypeptide reads, in one-letter code: Agmatine deiminase (374 aa).

The agmatine site is built by D220 and D226. C366 functions as the Amidino-cysteine intermediate in the catalytic mechanism.

The protein belongs to the agmatine deiminase family. In terms of assembly, forms homodimers.

The catalysed reaction is agmatine + H2O = N-carbamoylputrescine + NH4(+). It participates in amine and polyamine biosynthesis; putrescine biosynthesis via agmatine pathway; N-carbamoylputrescine from agmatine: step 1/1. Functionally, mediates the hydrolysis of agmatine into N-carbamoylputrescine in the arginine decarboxylase (ADC) pathway of putrescine biosynthesis, a basic polyamine. In Medicago truncatula (Barrel medic), this protein is Agmatine deiminase.